A 398-amino-acid chain; its full sequence is Putative FBD-associated F-box protein At5g56700 (398 aa).

Positions methionine 1–tyrosine 47 constitute an F-box domain. The FBD domain maps to tryptophan 340–isoleucine 388.

The sequence is that of Putative FBD-associated F-box protein At5g56700 from Arabidopsis thaliana (Mouse-ear cress).